We begin with the raw amino-acid sequence, 471 residues long: Replication factor C large subunit (471 aa).

Position 44-51 (44-51 (GSPGIGKT)) interacts with ATP. The segment covering 422–431 (RTDAAVDHSE) has biased composition (basic and acidic residues). The interval 422–471 (RTDAAVDHSEGAFAGAVREDNTDEDSAADETTDGDEDTGADSQRGLDEFF) is disordered. Residues 442–460 (NTDEDSAADETTDGDEDTG) show a composition bias toward acidic residues.

It belongs to the activator 1 small subunits family. RfcL subfamily. In terms of assembly, heteromultimer composed of small subunits (RfcS) and large subunits (RfcL).

Part of the RFC clamp loader complex which loads the PCNA sliding clamp onto DNA. In Halobacterium salinarum (strain ATCC 29341 / DSM 671 / R1), this protein is Replication factor C large subunit.